Reading from the N-terminus, the 289-residue chain is Diaminopimelate epimerase (289 aa).

Residues Asn-13, Gln-47, and Asn-67 each coordinate substrate. Catalysis depends on Cys-76, which acts as the Proton donor. Substrate is bound by residues 77 to 78, Asn-167, Asn-200, and 218 to 219; these read GN and ER. Residue Cys-227 is the Proton acceptor of the active site. Residue 228–229 coordinates substrate; it reads GT.

It belongs to the diaminopimelate epimerase family. As to quaternary structure, homodimer.

It localises to the cytoplasm. The catalysed reaction is (2S,6S)-2,6-diaminopimelate = meso-2,6-diaminopimelate. Its pathway is amino-acid biosynthesis; L-lysine biosynthesis via DAP pathway; DL-2,6-diaminopimelate from LL-2,6-diaminopimelate: step 1/1. Functionally, catalyzes the stereoinversion of LL-2,6-diaminopimelate (L,L-DAP) to meso-diaminopimelate (meso-DAP), a precursor of L-lysine and an essential component of the bacterial peptidoglycan. In Burkholderia ambifaria (strain ATCC BAA-244 / DSM 16087 / CCUG 44356 / LMG 19182 / AMMD) (Burkholderia cepacia (strain AMMD)), this protein is Diaminopimelate epimerase.